Reading from the N-terminus, the 168-residue chain is Protein GRIM REAPER (168 aa).

The first 30 residues, 1 to 30 (MVIKIPNTFIKATSLLSLILYFLIIATSKS), serve as a signal peptide directing secretion. Residue Asn59 is glycosylated (N-linked (GlcNAc...) asparagine).

The protein belongs to the STIG1 family. As to quaternary structure, interacts with PRK5 and to a lower extent with PRK4. As to expression, highly expressed in flowers, and at very low levels in leaves.

Its subcellular location is the secreted. It is found in the extracellular space. The protein localises to the apoplast. Involved in the regulation of cell death induced by extracellular reactive oxygen species. Only the processed peptide, and not the full length GRI can bind in vivo to the extracellular domain of the receptor PRK5. The GRIp-induced cell death is superoxide and salicylic acid dependent. The protein is Protein GRIM REAPER of Arabidopsis thaliana (Mouse-ear cress).